A 194-amino-acid chain; its full sequence is MSKMNPNEKKENASKNENVNNEEATNLQEEQSNAADEAAGSDNVSGEVEALQKKYNELNDSHLRLMAEFDNYRKRTMREKADLIKTGGEGALKNLLPIIDDFERALQNVRAAEDVEAVKEGVDLIFGKFMGYLSQQGVKPIEAIGKPFDTEEFEAIATIPAPEPDMKGKVLDCVQTGYTLFDKVIRHAKVVVGE.

Positions 1-14 (MSKMNPNEKKENAS) are enriched in basic and acidic residues. Positions 1-48 (MSKMNPNEKKENASKNENVNNEEATNLQEEQSNAADEAAGSDNVSGEV) are disordered. The segment covering 24 to 34 (ATNLQEEQSNA) has biased composition (polar residues).

The protein belongs to the GrpE family. In terms of assembly, homodimer.

The protein resides in the cytoplasm. Functionally, participates actively in the response to hyperosmotic and heat shock by preventing the aggregation of stress-denatured proteins, in association with DnaK and GrpE. It is the nucleotide exchange factor for DnaK and may function as a thermosensor. Unfolded proteins bind initially to DnaJ; upon interaction with the DnaJ-bound protein, DnaK hydrolyzes its bound ATP, resulting in the formation of a stable complex. GrpE releases ADP from DnaK; ATP binding to DnaK triggers the release of the substrate protein, thus completing the reaction cycle. Several rounds of ATP-dependent interactions between DnaJ, DnaK and GrpE are required for fully efficient folding. This Parabacteroides distasonis (strain ATCC 8503 / DSM 20701 / CIP 104284 / JCM 5825 / NCTC 11152) protein is Protein GrpE.